Reading from the N-terminus, the 156-residue chain is 6,7-dimethyl-8-ribityllumazine synthase (156 aa).

Residues Phe-23, 57-59, and 81-83 each bind 5-amino-6-(D-ribitylamino)uracil; these read AFE and AVI. Residue 86 to 87 coordinates (2S)-2-hydroxy-3-oxobutyl phosphate; sequence ST. The active-site Proton donor is His-89. Phe-114 is a binding site for 5-amino-6-(D-ribitylamino)uracil. Arg-128 contributes to the (2S)-2-hydroxy-3-oxobutyl phosphate binding site.

It belongs to the DMRL synthase family.

The catalysed reaction is (2S)-2-hydroxy-3-oxobutyl phosphate + 5-amino-6-(D-ribitylamino)uracil = 6,7-dimethyl-8-(1-D-ribityl)lumazine + phosphate + 2 H2O + H(+). The protein operates within cofactor biosynthesis; riboflavin biosynthesis; riboflavin from 2-hydroxy-3-oxobutyl phosphate and 5-amino-6-(D-ribitylamino)uracil: step 1/2. Functionally, catalyzes the formation of 6,7-dimethyl-8-ribityllumazine by condensation of 5-amino-6-(D-ribitylamino)uracil with 3,4-dihydroxy-2-butanone 4-phosphate. This is the penultimate step in the biosynthesis of riboflavin. The chain is 6,7-dimethyl-8-ribityllumazine synthase from Campylobacter fetus subsp. fetus (strain 82-40).